The following is a 169-amino-acid chain: Lipoprotein signal peptidase (169 aa).

Residues Met-1–Arg-9 lie on the Cytoplasmic side of the membrane. A helical membrane pass occupies residues Leu-10 to Phe-30. Residues Gln-31 to Gly-67 lie on the Periplasmic side of the membrane. The chain crosses the membrane as a helical span at residues Trp-68–Lys-89. The Cytoplasmic segment spans residues Arg-90–Thr-96. Residues Trp-97 to Val-118 form a helical membrane-spanning segment. At Leu-119–Asn-140 the chain is on the periplasmic side. Catalysis depends on residues Asp-124 and Asp-143. A helical transmembrane segment spans residues Leu-141 to Ala-154. Over Leu-155–Gly-169 the chain is Cytoplasmic.

The protein belongs to the peptidase A8 family. In terms of assembly, monomer in the crystal.

The protein resides in the cell inner membrane. It carries out the reaction Release of signal peptides from bacterial membrane prolipoproteins. Hydrolyzes -Xaa-Yaa-Zaa-|-(S,diacylglyceryl)Cys-, in which Xaa is hydrophobic (preferably Leu), and Yaa (Ala or Ser) and Zaa (Gly or Ala) have small, neutral side chains.. The protein operates within protein modification; lipoprotein biosynthesis (signal peptide cleavage). With respect to regulation, inhibited by globomycin. In terms of biological role, this protein specifically catalyzes the removal of signal peptides from prolipoproteins. This is Lipoprotein signal peptidase from Pseudomonas aeruginosa (strain ATCC 15692 / DSM 22644 / CIP 104116 / JCM 14847 / LMG 12228 / 1C / PRS 101 / PAO1).